Consider the following 364-residue polypeptide: Fructose-bisphosphate aldolase A (364 aa).

At tyrosine 5 the chain carries Phosphotyrosine. Threonine 9 carries the phosphothreonine modification. A phosphoserine mark is found at serine 36 and serine 39. At lysine 42 the chain carries N6-acetyllysine; alternate. A Glycyl lysine isopeptide (Lys-Gly) (interchain with G-Cter in SUMO1); alternate cross-link involves residue lysine 42. Lysine 42 participates in a covalent cross-link: Glycyl lysine isopeptide (Lys-Gly) (interchain with G-Cter in SUMO2); alternate. A beta-D-fructose 1,6-bisphosphate-binding site is contributed by arginine 43. Serine 46 bears the Phosphoserine mark. Position 99 is an N6-(2-hydroxyisobutyryl)lysine (lysine 99). N6-acetyllysine is present on lysine 108. An N6-acetyllysine; alternate modification is found at lysine 111. N6-malonyllysine; alternate is present on lysine 111. Serine 132 bears the Phosphoserine mark. At lysine 147 the chain carries N6-(2-hydroxyisobutyryl)lysine. The Proton acceptor role is filled by glutamate 188. Residue lysine 230 is the Schiff-base intermediate with dihydroxyacetone-P of the active site. Residue serine 272 is modified to Phosphoserine. Beta-D-fructose 1,6-bisphosphate is bound by residues 272–274, serine 301, and arginine 304; that span reads SGG. N6-malonyllysine is present on lysine 312. Lysine 330 carries the post-translational modification N6-acetyllysine.

Belongs to the class I fructose-bisphosphate aldolase family. In terms of assembly, homotetramer. Interacts with SNX9 and WAS. Interacts with FBP2; the interaction blocks FBP2 inhibition by physiological concentrations of AMP and reduces inhibition by Ca(2+).

The protein resides in the cytoplasm. It localises to the myofibril. Its subcellular location is the sarcomere. The protein localises to the i band. It is found in the m line. It carries out the reaction beta-D-fructose 1,6-bisphosphate = D-glyceraldehyde 3-phosphate + dihydroxyacetone phosphate. The protein operates within carbohydrate degradation; glycolysis; D-glyceraldehyde 3-phosphate and glycerone phosphate from D-glucose: step 4/4. Catalyzes the reversible conversion of beta-D-fructose 1,6-bisphosphate (FBP) into two triose phosphate and plays a key role in glycolysis and gluconeogenesis. In addition, may also function as scaffolding protein. The polypeptide is Fructose-bisphosphate aldolase A (ALDOA) (Pongo abelii (Sumatran orangutan)).